The chain runs to 343 residues: UPF0284 protein Msed_0735 (343 aa).

This sequence belongs to the UPF0284 family.

The sequence is that of UPF0284 protein Msed_0735 from Metallosphaera sedula (strain ATCC 51363 / DSM 5348 / JCM 9185 / NBRC 15509 / TH2).